We begin with the raw amino-acid sequence, 659 residues long: Delta(6)-protoilludene synthase (659 aa).

4 residues coordinate Mg(2+): Asp-91, Asn-227, Ser-231, and Glu-235. The DDXXD motif signature appears at 91–95; it reads DEHTD. The (2E,6E)-farnesyl diphosphate site is built by Arg-316 and Tyr-317. The disordered stretch occupies residues 528–586; sequence PQFSKTSGAPNGAHTPTTTNGSIKSNGFVSGDTNGHANGNGHVQTRSSTPSSSSSSTSS. Residues 530 to 573 are compositionally biased toward polar residues; that stretch reads FSKTSGAPNGAHTPTTTNGSIKSNGFVSGDTNGHANGNGHVQTR. The span at 574–586 shows a compositional bias: low complexity; the sequence is SSTPSSSSSSTSS.

Belongs to the terpene synthase family. Mg(2+) serves as cofactor.

The enzyme catalyses (2E,6E)-farnesyl diphosphate = Delta(6)-protoilludene + diphosphate. In terms of biological role, terpene cyclase that catalyzes the cyclization of farnesyl diphosphate (FPP) to delta(6)-protoilludene. The sequence is that of Delta(6)-protoilludene synthase from Cyclocybe aegerita (Black poplar mushroom).